Reading from the N-terminus, the 384-residue chain is MAP kinase-activated protein kinase 3 (384 aa).

N-acetylmethionine is present on M1. A disordered region spans residues 1 to 33 (MDGETAGEKGSLVPPPGALGGSALGGAPAPGVR). The region spanning 46–306 (QLSKQVLGLG…IMQFMNHPWI (261 aa)) is the Protein kinase domain. ATP is bound by residues 52–60 (LGLGVNGKV) and K75. The active-site Proton acceptor is D168. Position 203 is a phosphothreonine; by MAPK14 (T203). S253 carries the post-translational modification Phosphoserine; by MAPK14. A Phosphoserine; by autocatalysis modification is found at S309. Residues 309–345 (SMVVPQTPLYTARVLQEDKDHWDDVKEEMTSALATMR) are autoinhibitory helix. At T315 the chain carries Phosphothreonine; by MAPK14. The Nuclear export signal (NES) motif lies at 337–346 (MTSALATMRV). A p38 MAPK-binding site region spans residues 347–371 (DYDQVKIKDLKTSNNRLLNKRRKKQ). 2 consecutive short sequence motifs (bipartite nuclear localization signal) follow at residues 352–355 (KIKD) and 366–370 (KRRKK). A disordered region spans residues 359 to 384 (SNNRLLNKRRKKQAGSSSASQGCNNQ). Positions 372–384 (AGSSSASQGCNNQ) are enriched in polar residues.

This sequence belongs to the protein kinase superfamily. CAMK Ser/Thr protein kinase family. Heterodimer with p38-alpha/MAPK14. The heterodimer with p38-alpha/MAPK14 forms a stable complex: molecules are positioned 'face to face' so that the ATP-binding sites of both kinases are at the heterodimer interface. Interacts with TCF3 and with polycomb proteins, such as PCH2 and BMI1/PCGF4. Phosphorylated and activated by MAPK1/ERK2 and MAPK3/ERK1. Phosphorylated and activated by MAP kinase p38-alpha/MAPK14 at Thr-201, Ser-251 and Thr-313. Isoform 3 is degraded following phosphorylation at Thr-203. As to expression, ubiquitously expressed (at protein level). Isoform 3 is expressed in skeletal muscles and heart.

The protein resides in the nucleus. It is found in the cytoplasm. The catalysed reaction is L-seryl-[protein] + ATP = O-phospho-L-seryl-[protein] + ADP + H(+). The enzyme catalyses L-threonyl-[protein] + ATP = O-phospho-L-threonyl-[protein] + ADP + H(+). Activated following phosphorylation by p38-alpha/MAPK14 following various stresses. Inhibited by ligand 5B (2'-[2-(1,3-benzodioxol-5-yl)pyrimidin-4-yl]-5',6'-dihydrospiro[piperidine-4,7'-pyrrolo[3,2-c]pyridin]- 4'(1'h)-one) and ligand P4O (2-[2-(2-fluorophenyl)pyridin-4-yl]-1,5,6,7-tetrahydro- 4h-pyrrolo[3,2-c]pyridin-4-one), 2 ATP-competitive inhibitors. Functionally, stress-activated serine/threonine-protein kinase involved in cytokines production, endocytosis, cell migration, chromatin remodeling and transcriptional regulation. Following stress, it is phosphorylated and activated by MAP kinase p38-alpha/MAPK14, leading to phosphorylation of substrates. Phosphorylates serine in the peptide sequence, Hyd-X-R-X(2)-S, where Hyd is a large hydrophobic residue. MAPKAPK2 and MAPKAPK3, share the same function and substrate specificity, but MAPKAPK3 kinase activity and level in protein expression are lower compared to MAPKAPK2. Phosphorylates HSP27/HSPB1, KRT18, KRT20, RCSD1, RPS6KA3, TAB3 and TTP/ZFP36. Mediates phosphorylation of HSP27/HSPB1 in response to stress, leading to dissociate HSP27/HSPB1 from large small heat-shock protein (sHsps) oligomers and impair their chaperone activities and ability to protect against oxidative stress effectively. Involved in inflammatory response by regulating tumor necrosis factor (TNF) and IL6 production post-transcriptionally: acts by phosphorylating AU-rich elements (AREs)-binding proteins, such as TTP/ZFP36, leading to regulate the stability and translation of TNF and IL6 mRNAs. Phosphorylation of TTP/ZFP36, a major post-transcriptional regulator of TNF, promotes its binding to 14-3-3 proteins and reduces its ARE mRNA affinity leading to inhibition of dependent degradation of ARE-containing transcript. Involved in toll-like receptor signaling pathway (TLR) in dendritic cells: required for acute TLR-induced macropinocytosis by phosphorylating and activating RPS6KA3. Also acts as a modulator of Polycomb-mediated repression. This Mus musculus (Mouse) protein is MAP kinase-activated protein kinase 3 (Mapkapk3).